The chain runs to 587 residues: Arginine--tRNA ligase (587 aa).

Positions 123–133 (ANVAKPLHVGH) match the 'HIGH' region motif.

The protein belongs to the class-I aminoacyl-tRNA synthetase family. As to quaternary structure, monomer.

The protein resides in the cytoplasm. It carries out the reaction tRNA(Arg) + L-arginine + ATP = L-arginyl-tRNA(Arg) + AMP + diphosphate. This is Arginine--tRNA ligase from Alkaliphilus oremlandii (strain OhILAs) (Clostridium oremlandii (strain OhILAs)).